A 270-amino-acid polypeptide reads, in one-letter code: Elongation factor Ts (270 aa).

Residues 75–78 (TDFV) form an involved in Mg(2+) ion dislocation from EF-Tu region.

It belongs to the EF-Ts family.

Its subcellular location is the cytoplasm. Associates with the EF-Tu.GDP complex and induces the exchange of GDP to GTP. It remains bound to the aminoacyl-tRNA.EF-Tu.GTP complex up to the GTP hydrolysis stage on the ribosome. In Cutibacterium acnes (strain DSM 16379 / KPA171202) (Propionibacterium acnes), this protein is Elongation factor Ts.